Consider the following 281-residue polypeptide: MEMO1 family protein Pars_0062 (281 aa).

The protein belongs to the MEMO1 family.

The polypeptide is MEMO1 family protein Pars_0062 (Pyrobaculum arsenaticum (strain DSM 13514 / JCM 11321 / PZ6)).